Here is a 459-residue protein sequence, read N- to C-terminus: Ribulose bisphosphate carboxylase large chain (459 aa).

Lys-4 bears the N6,N6,N6-trimethyllysine mark. Substrate is bound by residues Asn-113 and Thr-163. The active-site Proton acceptor is the Lys-165. Lys-167 serves as a coordination point for substrate. 3 residues coordinate Mg(2+): Lys-191, Asp-193, and Glu-194. At Lys-191 the chain carries N6-carboxylysine. The active-site Proton acceptor is the His-284. Positions 285, 317, and 369 each coordinate substrate.

This sequence belongs to the RuBisCO large chain family. Type I subfamily. As to quaternary structure, heterohexadecamer of 8 large chains and 8 small chains; disulfide-linked. The disulfide link is formed within the large subunit homodimers. The cofactor is Mg(2+). The disulfide bond which can form in the large chain dimeric partners within the hexadecamer appears to be associated with oxidative stress and protein turnover.

The protein resides in the plastid. Its subcellular location is the chloroplast. It carries out the reaction 2 (2R)-3-phosphoglycerate + 2 H(+) = D-ribulose 1,5-bisphosphate + CO2 + H2O. The enzyme catalyses D-ribulose 1,5-bisphosphate + O2 = 2-phosphoglycolate + (2R)-3-phosphoglycerate + 2 H(+). In terms of biological role, ruBisCO catalyzes two reactions: the carboxylation of D-ribulose 1,5-bisphosphate, the primary event in carbon dioxide fixation, as well as the oxidative fragmentation of the pentose substrate in the photorespiration process. Both reactions occur simultaneously and in competition at the same active site. The protein is Ribulose bisphosphate carboxylase large chain of Heuchera micrantha (Alum root).